A 340-amino-acid polypeptide reads, in one-letter code: Organic solute transporter subunit alpha (340 aa).

Topologically, residues 1–52 are extracellular; it reads MEPDRTQIRLDPRYTADLLEILKTNYSVPSACFSYPPTAAQLLRALGPVDIS. Asn-25 carries N-linked (GlcNAc...) asparagine glycosylation. The chain crosses the membrane as a helical span at residues 53–73; sequence LMVIMTLFVLGSIAIFLEAAV. Over 74-87 the chain is Cytoplasmic; sequence YLHKNTRCPIKRKT. Residues 88-108 form a helical membrane-spanning segment; sequence LIWCSSSPTIVSAFSCFGLWI. The Extracellular segment spans residues 109 to 110; it reads PR. The chain crosses the membrane as a helical span at residues 111–131; that stretch reads ALTLVEMAITTFYSMCFYLLM. Residues 132–186 are Cytoplasmic-facing; it reads QAMVEGFGGKEAVLRTLKDTPVMIHTGPCCCCCPCCPRIKITRKRLQLLLLGPIQ. A helical membrane pass occupies residues 187–207; that stretch reads YAFFKISLTLVGLFLIPDGIF. Residues 208–219 are Extracellular-facing; it reads DPSDISEGSTAL. A helical membrane pass occupies residues 220–240; sequence WINTFLGVSTLSALWTIGIIF. The Cytoplasmic portion of the chain corresponds to 241-255; the sequence is RQARLHLGEQNIGAK. The helical transmembrane segment at 256–276 threads the bilayer; it reads FVLFQALLILSALQPSIFSVL. Over 277–295 the chain is Extracellular; it reads ASGGQIACSPPFSSKIRSQ. A helical transmembrane segment spans residues 296 to 316; sequence VMNCHLLILESFLITVLTRIY. Residues 317-340 lie on the Cytoplasmic side of the membrane; it reads YRRKDDKLGYEPFSSPDQDLNLKA. Position 330 is a phosphoserine (Ser-330).

Belongs to the OST-alpha family. In terms of assembly, interacts with SLC51B. The Ost-alpha/Ost-beta complex is a heterodimer composed of alpha (SLC51A) and beta (SLC51B) subunit.

Its subcellular location is the cell membrane. It is found in the endoplasmic reticulum membrane. It carries out the reaction taurocholate(out) = taurocholate(in). It catalyses the reaction estrone 3-sulfate(out) = estrone 3-sulfate(in). The enzyme catalyses dehydroepiandrosterone 3-sulfate(out) = dehydroepiandrosterone 3-sulfate(in). The catalysed reaction is tauroursodeoxycholate(out) = tauroursodeoxycholate(in). It carries out the reaction glycoursodeoxycholate(out) = glycoursodeoxycholate(in). It catalyses the reaction glycocholate(out) = glycocholate(in). The enzyme catalyses taurochenodeoxycholate(out) = taurochenodeoxycholate(in). The catalysed reaction is glycochenodeoxycholate(out) = glycochenodeoxycholate(in). It carries out the reaction taurodeoxycholate(out) = taurodeoxycholate(in). It catalyses the reaction glycodeoxycholate(out) = glycodeoxycholate(in). The enzyme catalyses prostaglandin E2(out) = prostaglandin E2(in). Its function is as follows. Essential component of the Ost-alpha/Ost-beta complex, a heterodimer that acts as the intestinal basolateral transporter responsible for bile acid export from enterocytes into portal blood. Efficiently transports the major species of bile acids (taurocholate). Taurine conjugates are transported more efficiently across the basolateral membrane than glycine-conjugated bile acids. Can also transport steroids such as estrone 3-sulfate and dehydroepiandrosterone 3-sulfate, therefore playing a role in the enterohepatic circulation of sterols. Able to transport eicosanoids such as prostaglandin E2. In Bos taurus (Bovine), this protein is Organic solute transporter subunit alpha (SLC51A).